Here is a 355-residue protein sequence, read N- to C-terminus: UDP-N-acetylglucosamine--N-acetylmuramyl-(pentapeptide) pyrophosphoryl-undecaprenol N-acetylglucosamine transferase (355 aa).

Residues 14 to 16, Asn-126, Arg-162, Ser-190, Ile-243, 262 to 267, and Gln-287 contribute to the UDP-N-acetyl-alpha-D-glucosamine site; these read TGG and ALTVSE.

This sequence belongs to the glycosyltransferase 28 family. MurG subfamily.

It is found in the cell inner membrane. It carries out the reaction di-trans,octa-cis-undecaprenyl diphospho-N-acetyl-alpha-D-muramoyl-L-alanyl-D-glutamyl-meso-2,6-diaminopimeloyl-D-alanyl-D-alanine + UDP-N-acetyl-alpha-D-glucosamine = di-trans,octa-cis-undecaprenyl diphospho-[N-acetyl-alpha-D-glucosaminyl-(1-&gt;4)]-N-acetyl-alpha-D-muramoyl-L-alanyl-D-glutamyl-meso-2,6-diaminopimeloyl-D-alanyl-D-alanine + UDP + H(+). It functions in the pathway cell wall biogenesis; peptidoglycan biosynthesis. Cell wall formation. Catalyzes the transfer of a GlcNAc subunit on undecaprenyl-pyrophosphoryl-MurNAc-pentapeptide (lipid intermediate I) to form undecaprenyl-pyrophosphoryl-MurNAc-(pentapeptide)GlcNAc (lipid intermediate II). This Vibrio campbellii (strain ATCC BAA-1116) protein is UDP-N-acetylglucosamine--N-acetylmuramyl-(pentapeptide) pyrophosphoryl-undecaprenol N-acetylglucosamine transferase.